The chain runs to 1164 residues: IgA FC receptor (1164 aa).

The first 37 residues, 1 to 37 (MFKSNYERKMRYSIRKFSVGVASVAVASLFMGSVAHA), serve as a signal peptide directing secretion. 2 disordered regions span residues 54–75 (KPYP…ELET) and 167–220 (HEEV…EDKD). The span at 59-73 (MAQTDQGNNSSSSEL) shows a compositional bias: polar residues. Composition is skewed to basic and acidic residues over residues 167 to 176 (HEEVEKDKKA) and 183 to 220 (KQSD…EDKD). IgA-binding regions lie at residues 199–438 (NHQK…KIEL) and 439–826 (TVSP…ETNT). The Ig-like domain occupies 434 to 534 (QKIELTVSPE…VEKTFTITVQ (101 aa)). Residues 536–564 (KEEKQVPKTPEQKDSKTEEKVPQEPKSND) are compositionally biased toward basic and acidic residues. 2 disordered regions span residues 536 to 567 (KEEK…DKNQ) and 823 to 947 (ETNT…PDGL). Residues 911–920 (PKIPEPPKTP) are compositionally biased toward pro residues. Positions 1132–1136 (LPYTG) match the LPXTG sorting signal motif. Thr-1135 bears the Pentaglycyl murein peptidoglycan amidated threonine mark. The propeptide at 1136-1164 (GVASNLVLEIMGLLGLIGTSFIAMKRRKS) is removed by sortase.

It is found in the secreted. The protein resides in the cell wall. This Streptococcus agalactiae protein is IgA FC receptor (bag).